Consider the following 123-residue polypeptide: MPRGCALLLASLLLASALSATLGLGSPVKEKRGWTLNSAGYLLGPHAIDNHRSFHDKYGLAGKRELEPEDEARPGGFDRLQSEDKAIRTIMEFLAFLHLKEAGALGRLPGLPSAASSEDAGQS.

A signal peptide spans 1–19; the sequence is MPRGCALLLASLLLASALS. The propeptide occupies 20-30; sequence ATLGLGSPVKE. Alanine 61 is subject to Alanine amide. Serine 116 and serine 117 each carry phosphoserine.

The protein belongs to the galanin family.

The protein resides in the secreted. Its function is as follows. Endocrine hormone of the central and peripheral nervous systems that binds and activates the G protein-coupled receptors GALR1, GALR2, and GALR3. This small neuropeptide may regulate diverse physiologic functions including contraction of smooth muscle of the gastrointestinal and genitourinary tract, growth hormone and insulin release and adrenal secretion. The sequence is that of Galanin peptides (GAL) from Sus scrofa (Pig).